Consider the following 289-residue polypeptide: Zinc finger matrin-type protein 3 (289 aa).

2 Matrin-type zinc fingers span residues 70-100 (LFCK…KLRN) and 147-177 (DYCK…RLRL). Disordered stretches follow at residues 180–202 (AQSH…EGSE) and 265–289 (ESKQ…GYVQ). The Matrin-type 3 zinc-finger motif lies at 245–275 (FYCSMCNVGAGEEVEFRQHLESKQHKSKVSE). Residues 265 to 282 (ESKQHKSKVSEQRYRSEM) are compositionally biased toward basic and acidic residues.

In terms of assembly, interacts with dsRNA. As to expression, highly expressed in brain, gut, lung, and testis.

It localises to the nucleus. The protein localises to the nucleolus. Functionally, acts as a bona fide target gene of p53/TP53. May play a role in the TP53-dependent growth regulatory pathway. May contribute to TP53-mediated apoptosis by regulation of TP53 expression and translocation to the nucleus and nucleolus. The sequence is that of Zinc finger matrin-type protein 3 from Rattus norvegicus (Rat).